An 89-amino-acid polypeptide reads, in one-letter code: MHRNDFTCFTQSVYTKKDGSVESQICCLTNRIVKLTRHFQTHRKDYSSQRGLWKILGRRKRLLIYLLQTDAIGYRDLTTQLKIRKLKKK.

This sequence belongs to the universal ribosomal protein uS15 family. Part of the 30S ribosomal subunit.

Its subcellular location is the plastid. This is Small ribosomal subunit protein uS15c (rps15) from Aneura mirabilis (Parasitic liverwort).